Here is a 199-residue protein sequence, read N- to C-terminus: Chaperone protein TorD (199 aa).

Belongs to the TorD/DmsD family. TorD subfamily.

The protein localises to the cytoplasm. Its function is as follows. Involved in the biogenesis of TorA. Acts on TorA before the insertion of the molybdenum cofactor and, as a result, probably favors a conformation of the apoenzyme that is competent for acquiring the cofactor. The chain is Chaperone protein TorD from Escherichia coli (strain K12 / MC4100 / BW2952).